The chain runs to 345 residues: Biotin synthase (345 aa).

Residues 59 to 286 (NEVQLSTLLS…TTMVRLSAGR (228 aa)) enclose the Radical SAM core domain. Cys74, Cys78, and Cys81 together coordinate [4Fe-4S] cluster. Cys118, Cys149, Cys209, and Arg281 together coordinate [2Fe-2S] cluster.

The protein belongs to the radical SAM superfamily. Biotin synthase family. As to quaternary structure, homodimer. Requires [4Fe-4S] cluster as cofactor. [2Fe-2S] cluster serves as cofactor.

It carries out the reaction (4R,5S)-dethiobiotin + (sulfur carrier)-SH + 2 reduced [2Fe-2S]-[ferredoxin] + 2 S-adenosyl-L-methionine = (sulfur carrier)-H + biotin + 2 5'-deoxyadenosine + 2 L-methionine + 2 oxidized [2Fe-2S]-[ferredoxin]. It functions in the pathway cofactor biosynthesis; biotin biosynthesis; biotin from 7,8-diaminononanoate: step 2/2. Functionally, catalyzes the conversion of dethiobiotin (DTB) to biotin by the insertion of a sulfur atom into dethiobiotin via a radical-based mechanism. This Leptothrix cholodnii (strain ATCC 51168 / LMG 8142 / SP-6) (Leptothrix discophora (strain SP-6)) protein is Biotin synthase.